We begin with the raw amino-acid sequence, 442 residues long: Probable xylan O-acetyltransferase 8 (442 aa).

The Cytoplasmic portion of the chain corresponds to 1–13; that stretch reads MVQLPAMKRVKGR. The helical; Signal-anchor for type II membrane protein transmembrane segment at 14-34 threads the bilayer; it reads APLSVVVAIIGGLALAGIIFT. Residues 35–442 are Lumenal-facing; sequence EDLRGLTEVK…TWNRLLYAHL (408 aa). An N-linked (GlcNAc...) asparagine glycan is attached at asparagine 96. 4 disulfides stabilise this stretch: cysteine 100-cysteine 151, cysteine 122-cysteine 187, cysteine 131-cysteine 426, and cysteine 344-cysteine 422. The GDS motif motif lies at 174–176; the sequence is GDS. The active-site Nucleophile is the serine 176. 3 N-linked (GlcNAc...) asparagine glycosylation sites follow: asparagine 217, asparagine 346, and asparagine 384. Catalysis depends on aspartate 421, which acts as the Proton donor. Residues 421–424 carry the DXXH motif motif; the sequence is DCIH. Histidine 424 acts as the Proton acceptor in catalysis.

Belongs to the PC-esterase family. TBL subfamily.

The protein localises to the golgi apparatus membrane. In terms of biological role, probable xylan acetyltransferase required for 2-O- and 3-O-monoacetylation of xylosyl residues in xylan. Possesses extremely low activity in vitro. The sequence is that of Probable xylan O-acetyltransferase 8 from Oryza sativa subsp. japonica (Rice).